The sequence spans 264 residues: Indole-3-glycerol phosphate synthase (264 aa).

This sequence belongs to the TrpC family.

It carries out the reaction 1-(2-carboxyphenylamino)-1-deoxy-D-ribulose 5-phosphate + H(+) = (1S,2R)-1-C-(indol-3-yl)glycerol 3-phosphate + CO2 + H2O. It functions in the pathway amino-acid biosynthesis; L-tryptophan biosynthesis; L-tryptophan from chorismate: step 4/5. This chain is Indole-3-glycerol phosphate synthase, found in Xylella fastidiosa (strain M12).